The chain runs to 210 residues: Small ribosomal subunit protein uS7 (210 aa).

The protein belongs to the universal ribosomal protein uS7 family. As to quaternary structure, component of the small ribosomal subunit. Part of the small subunit (SSU) processome, composed of more than 70 proteins and the RNA chaperone small nucleolar RNA (snoRNA) U3.

It is found in the cytoplasm. The protein resides in the nucleus. Its subcellular location is the nucleolus. Component of the small ribosomal subunit. The ribosome is a large ribonucleoprotein complex responsible for the synthesis of proteins in the cell. Part of the small subunit (SSU) processome, first precursor of the small eukaryotic ribosomal subunit. During the assembly of the SSU processome in the nucleolus, many ribosome biogenesis factors, an RNA chaperone and ribosomal proteins associate with the nascent pre-rRNA and work in concert to generate RNA folding, modifications, rearrangements and cleavage as well as targeted degradation of pre-ribosomal RNA by the RNA exosome. The polypeptide is Small ribosomal subunit protein uS7 (rps-5) (Caenorhabditis elegans).